A 968-amino-acid chain; its full sequence is RNA polymerase-associated protein RapA (968 aa).

Positions glutamate 164–aspartate 334 constitute a Helicase ATP-binding domain. Residue aspartate 177–threonine 184 participates in ATP binding. Positions aspartate 280–histidine 283 match the DEAH box motif. Positions arginine 490–aspartate 664 constitute a Helicase C-terminal domain.

This sequence belongs to the SNF2/RAD54 helicase family. RapA subfamily. Interacts with the RNAP. Has a higher affinity for the core RNAP than for the holoenzyme. Its ATPase activity is stimulated by binding to RNAP.

Functionally, transcription regulator that activates transcription by stimulating RNA polymerase (RNAP) recycling in case of stress conditions such as supercoiled DNA or high salt concentrations. Probably acts by releasing the RNAP, when it is trapped or immobilized on tightly supercoiled DNA. Does not activate transcription on linear DNA. Probably not involved in DNA repair. This is RNA polymerase-associated protein RapA from Yersinia enterocolitica serotype O:8 / biotype 1B (strain NCTC 13174 / 8081).